Reading from the N-terminus, the 330-residue chain is Ketol-acid reductoisomerase (NADP(+)) (330 aa).

A KARI N-terminal Rossmann domain is found at 1-181; sequence MKVLYDDDVN…GLTRAGVIET (181 aa). Residues 24–27, arginine 47, serine 52, and 82–85 contribute to the NADP(+) site; these read YGSQ and DEIQ. Residue histidine 107 is part of the active site. Residue glycine 133 participates in NADP(+) binding. Residues 182-327 enclose the KARI C-terminal knotted domain; the sequence is TYREETETDL…KNLRIACGLQ (146 aa). Mg(2+) contacts are provided by aspartate 190, glutamate 194, glutamate 226, and glutamate 230. Serine 251 serves as a coordination point for substrate.

Belongs to the ketol-acid reductoisomerase family. The cofactor is Mg(2+).

The enzyme catalyses (2R)-2,3-dihydroxy-3-methylbutanoate + NADP(+) = (2S)-2-acetolactate + NADPH + H(+). It catalyses the reaction (2R,3R)-2,3-dihydroxy-3-methylpentanoate + NADP(+) = (S)-2-ethyl-2-hydroxy-3-oxobutanoate + NADPH + H(+). Its pathway is amino-acid biosynthesis; L-isoleucine biosynthesis; L-isoleucine from 2-oxobutanoate: step 2/4. It functions in the pathway amino-acid biosynthesis; L-valine biosynthesis; L-valine from pyruvate: step 2/4. Involved in the biosynthesis of branched-chain amino acids (BCAA). Catalyzes an alkyl-migration followed by a ketol-acid reduction of (S)-2-acetolactate (S2AL) to yield (R)-2,3-dihydroxy-isovalerate. In the isomerase reaction, S2AL is rearranged via a Mg-dependent methyl migration to produce 3-hydroxy-3-methyl-2-ketobutyrate (HMKB). In the reductase reaction, this 2-ketoacid undergoes a metal-dependent reduction by NADPH to yield (R)-2,3-dihydroxy-isovalerate. The chain is Ketol-acid reductoisomerase (NADP(+)) from Methanosphaera stadtmanae (strain ATCC 43021 / DSM 3091 / JCM 11832 / MCB-3).